Here is a 232-residue protein sequence, read N- to C-terminus: Large ribosomal subunit protein uL1 (232 aa).

The protein belongs to the universal ribosomal protein uL1 family. In terms of assembly, part of the 50S ribosomal subunit.

Its function is as follows. Binds directly to 23S rRNA. The L1 stalk is quite mobile in the ribosome, and is involved in E site tRNA release. Protein L1 is also a translational repressor protein, it controls the translation of the L11 operon by binding to its mRNA. This Chlamydia caviae (strain ATCC VR-813 / DSM 19441 / 03DC25 / GPIC) (Chlamydophila caviae) protein is Large ribosomal subunit protein uL1.